The sequence spans 1408 residues: DNA-directed RNA polymerase subunit beta (1408 aa).

The interval Pro1383 to Ala1408 is disordered. The span at Gly1399–Ala1408 shows a compositional bias: basic and acidic residues.

The protein belongs to the RNA polymerase beta chain family. In terms of assembly, the RNAP catalytic core consists of 2 alpha, 1 beta, 1 beta' and 1 omega subunit. When a sigma factor is associated with the core the holoenzyme is formed, which can initiate transcription.

The catalysed reaction is RNA(n) + a ribonucleoside 5'-triphosphate = RNA(n+1) + diphosphate. Its function is as follows. DNA-dependent RNA polymerase catalyzes the transcription of DNA into RNA using the four ribonucleoside triphosphates as substrates. The polypeptide is DNA-directed RNA polymerase subunit beta (Myxococcus xanthus (strain DK1622)).